The following is a 673-amino-acid chain: UvrABC system protein B (673 aa).

The Helicase ATP-binding domain maps to 26–183 (EGLEDGLAHQ…RRLAELQYAR (158 aa)). An ATP-binding site is contributed by 39 to 46 (GVTGSGKT). A Beta-hairpin motif is present at residues 92–115 (YYDYYQPEAYVPSSDTFIEKDASV). Positions 431–597 (QVDDLLSEIR…GLNKKVVDIL (167 aa)) constitute a Helicase C-terminal domain. Residues 633-668 (QQKIHELEGLMMQHAQNLEFEEAAQVRDQLHQLRQL) enclose the UVR domain.

It belongs to the UvrB family. In terms of assembly, forms a heterotetramer with UvrA during the search for lesions. Interacts with UvrC in an incision complex.

It localises to the cytoplasm. In terms of biological role, the UvrABC repair system catalyzes the recognition and processing of DNA lesions. A damage recognition complex composed of 2 UvrA and 2 UvrB subunits scans DNA for abnormalities. Upon binding of the UvrA(2)B(2) complex to a putative damaged site, the DNA wraps around one UvrB monomer. DNA wrap is dependent on ATP binding by UvrB and probably causes local melting of the DNA helix, facilitating insertion of UvrB beta-hairpin between the DNA strands. Then UvrB probes one DNA strand for the presence of a lesion. If a lesion is found the UvrA subunits dissociate and the UvrB-DNA preincision complex is formed. This complex is subsequently bound by UvrC and the second UvrB is released. If no lesion is found, the DNA wraps around the other UvrB subunit that will check the other stand for damage. This is UvrABC system protein B from Enterobacter sp. (strain 638).